Here is a 130-residue protein sequence, read N- to C-terminus: Fluoride-specific ion channel FluC (130 aa).

Helical transmembrane passes span 9–29 (LAIILGAIPGALARYYATIFL), 39–59 (YATFLINFSGCVGMGLVVTLA), 71–91 (LLLAVGFLGSYTTFSTYALEV), and 104–124 (VLYGLGSLGIGTIGVLLGSLI). Na(+) is bound by residues Gly79 and Thr82.

This sequence belongs to the fluoride channel Fluc/FEX (TC 1.A.43) family.

Its subcellular location is the cell inner membrane. The enzyme catalyses fluoride(in) = fluoride(out). Na(+) is not transported, but it plays an essential structural role and its presence is essential for fluoride channel function. In terms of biological role, fluoride-specific ion channel. Important for reducing fluoride concentration in the cell, thus reducing its toxicity. This Synechocystis sp. (strain ATCC 27184 / PCC 6803 / Kazusa) protein is Fluoride-specific ion channel FluC.